A 287-amino-acid polypeptide reads, in one-letter code: Pyridoxal 5'-phosphate synthase subunit PdxS (287 aa).

A D-ribose 5-phosphate-binding site is contributed by D21. Residue K78 is the Schiff-base intermediate with D-ribose 5-phosphate of the active site. D-ribose 5-phosphate is bound at residue G150. R162 is a binding site for D-glyceraldehyde 3-phosphate. D-ribose 5-phosphate is bound by residues G211 and 232–233 (GS).

Belongs to the PdxS/SNZ family. In the presence of PdxT, forms a dodecamer of heterodimers.

The enzyme catalyses aldehydo-D-ribose 5-phosphate + D-glyceraldehyde 3-phosphate + L-glutamine = pyridoxal 5'-phosphate + L-glutamate + phosphate + 3 H2O + H(+). It functions in the pathway cofactor biosynthesis; pyridoxal 5'-phosphate biosynthesis. Its function is as follows. Catalyzes the formation of pyridoxal 5'-phosphate from ribose 5-phosphate (RBP), glyceraldehyde 3-phosphate (G3P) and ammonia. The ammonia is provided by the PdxT subunit. Can also use ribulose 5-phosphate and dihydroxyacetone phosphate as substrates, resulting from enzyme-catalyzed isomerization of RBP and G3P, respectively. In Tropheryma whipplei (strain Twist) (Whipple's bacillus), this protein is Pyridoxal 5'-phosphate synthase subunit PdxS.